A 137-amino-acid chain; its full sequence is MGDWKGYISAVLRDQRIDDVAIVGHSDNRCVWASRPGGLLAAISPQEVGVLTGPDRHTFLQTGLSVAGRRCCVIRDYLLAEGDGVLDARTKGLDGRAICVGHTPRALLVLMGRRGVHGGILNKTVHDLIGGLREQCS.

This sequence belongs to the profilin family. Interacts with ACTRT3. Detected in round spermatids.

It localises to the cytoplasm. It is found in the cytoskeleton. The protein resides in the nucleus. Binds to actin and affects the structure of the cytoskeleton. Slightly reduces actin polymerization. Binds to poly-L-proline, phosphatidylinositol 3-phosphate (PtdIns(3)P), phosphatidylinositol 4,5-bisphosphate (PtdIns(4,5)P2), and phosphatidylinositol 4-phosphate (PtdIns(4)P). May be involved in spermatogenesis. The protein is Profilin-3 (Pfn3) of Rattus norvegicus (Rat).